A 417-amino-acid chain; its full sequence is Phosphoglycerate kinase 2 (417 aa).

Ser-4 carries the phosphoserine modification. Lys-11 carries the N6-acetyllysine modification. Residues Val-23, Asp-24, Phe-25, Asn-26, Gln-38, and Arg-39 each coordinate (2R)-3-phosphoglycerate. Lys-48 carries the N6-acetyllysine modification. (2R)-3-phosphoglycerate-binding residues include Ser-62, His-63, Gly-65, and Arg-66. Lys-75, Lys-86, and Lys-97 each carry N6-acetyllysine. 2 residues coordinate (2R)-3-phosphoglycerate: Leu-122 and Arg-123. An N6-acetyllysine mark is found at Lys-131 and Lys-146. Residues His-170 and Arg-171 each contribute to the (2R)-3-phosphoglycerate site. Phosphotyrosine is present on Tyr-196. Position 199 is an N6-acetyllysine (Lys-199). Gly-214 contributes to the ADP binding site. Gly-214 is a binding site for CDP. Ala-215 and Lys-216 together coordinate AMP. An ATP-binding site is contributed by Ala-215. Ala-215 contacts Mg(2+). Asp-219 serves as a coordination point for CDP. Mg(2+) is bound at residue Asp-219. Residue Lys-220 coordinates AMP. Lys-220 is an ATP binding site. Gly-238 provides a ligand contact to ADP. Residue Gly-238 coordinates CDP. Gly-239 is a binding site for AMP. Gly-239 serves as a coordination point for ATP. N6-acetyllysine is present on residues Lys-267 and Lys-291. AMP is bound at residue Gly-313. Residue Gly-313 coordinates ATP. Residues Gly-338, Ile-340, and Phe-343 each contribute to the CDP site. Position 343 (Phe-343) interacts with ADP. Glu-344 contributes to the AMP binding site. ATP is bound by residues Glu-344, Asp-375, and Thr-376. Asp-375 provides a ligand contact to Mg(2+).

It belongs to the phosphoglycerate kinase family. In terms of assembly, monomer. Mg(2+) serves as cofactor. As to expression, testis and sperm. Localized on the principle piece in the sperm (at protein level). Testis-specific.

It is found in the cytoplasm. The catalysed reaction is (2R)-3-phosphoglycerate + ATP = (2R)-3-phospho-glyceroyl phosphate + ADP. It participates in carbohydrate degradation; glycolysis; pyruvate from D-glyceraldehyde 3-phosphate: step 2/5. In terms of biological role, essential for sperm motility and male fertility but is not required for the completion of spermatogenesis. The protein is Phosphoglycerate kinase 2 (Pgk2) of Mus musculus (Mouse).